Reading from the N-terminus, the 335-residue chain is Eukaryotic translation initiation factor 3 subunit I (335 aa).

WD repeat units lie at residues 8 to 47 (GHERSLNQIKFNRDGDLLFSVAKDKIVCAWWSANGERLGT), 50 to 91 (GHQG…KVWD), 145 to 184 (CTESKATVAGWSYLAKYIIAGHEDGSVSQYDSKTGEQLEN), 189 to 228 (EFDNLISDIQFSADRTYFITASKDKSAKLISSRNLAILKT), and 286 to 325 (GHFGPLNTVAVHPNGTAYASGGEDGYVRVHHFDKPYFDFM).

Belongs to the eIF-3 subunit I family. In terms of assembly, component of the eukaryotic translation initiation factor 3 (eIF-3) complex.

The protein localises to the cytoplasm. Its function is as follows. Component of the eukaryotic translation initiation factor 3 (eIF-3) complex, which is involved in protein synthesis of a specialized repertoire of mRNAs and, together with other initiation factors, stimulates binding of mRNA and methionyl-tRNAi to the 40S ribosome. The eIF-3 complex specifically targets and initiates translation of a subset of mRNAs involved in cell proliferation. This Aspergillus oryzae (strain ATCC 42149 / RIB 40) (Yellow koji mold) protein is Eukaryotic translation initiation factor 3 subunit I (tif34).